The following is a 110-amino-acid chain: Nodulation protein NolE (110 aa).

Residues Met1 to Ala25 form the signal peptide. The tract at residues Asp27–Thr64 is disordered. Residues Asp48–Gln57 show a composition bias toward basic and acidic residues.

It localises to the periplasm. This Rhizobium leguminosarum bv. phaseoli protein is Nodulation protein NolE (nolE).